The following is a 146-amino-acid chain: Hemoglobin subunit beta (146 aa).

One can recognise a Globin domain in the interval Glu-2–His-146. Positions 63 and 92 each coordinate heme b.

The protein belongs to the globin family. In terms of assembly, heterotetramer of two alpha chains and two beta chains. Can form polymers. As to expression, red blood cells.

Functionally, involved in oxygen transport from gills to the various peripheral tissues. The sequence is that of Hemoglobin subunit beta (hbb) from Chelidonichthys kumu (Bluefin gurnard).